Reading from the N-terminus, the 271-residue chain is Coiled-coil domain-containing protein ORF29 (271 aa).

The disordered stretch occupies residues 1-39 (MNEKTESEIFEEQNSLYKPIKQEKKTPSTPESEDKNDQS). A compositionally biased stretch (basic and acidic residues) spans 20 to 37 (IKQEKKTPSTPESEDKND). Residues 208–228 (RATQTQEILLNSLRKNLQMLE) adopt a coiled-coil conformation.

This Helicobacter pylori (strain 35A) protein is Coiled-coil domain-containing protein ORF29.